Here is a 421-residue protein sequence, read N- to C-terminus: MDYLQITKSPTLQGSVSISGAKNSALPILAATLLSQNEVTINNLPDVADVKTLAKLLEHLGVNITWHKPTSLTCLAENIVHTRAIYDIVRKMRASILVLGPLLSRFGYCEVSLPGGCAIGARPVDLHIKAMEKMGADIQIKGGYIIAQAKGGLKGADILFDKITVTGSENVIMAAALAQGKTHIINAAKEPEVVQLCEILSQSGVKIEGIGGNELIIYGTGGELLNFAPICVIPDRIEAGTYLCAGAITNSSITLENVENNHLSAITDKLEEIGFGFNKSEHSLTLLPAQSLKPFEIITTEYPGFPTDMQAQFMALATQCEGTSVIEERLFENRFMHVSELQRLGADISLKGNHATIKGISPLLGADVMATDLRASSALVVASLVSEGTTNIHRIYHLDRGYERLEHKLQHLGVNIVRLKS.

22 to 23 (KN) serves as a coordination point for phosphoenolpyruvate. Arg93 contacts UDP-N-acetyl-alpha-D-glucosamine. Catalysis depends on Cys117, which acts as the Proton donor. Residue Cys117 is modified to 2-(S-cysteinyl)pyruvic acid O-phosphothioketal. UDP-N-acetyl-alpha-D-glucosamine is bound by residues 122–126 (RPVDL), Asp308, and Leu330.

This sequence belongs to the EPSP synthase family. MurA subfamily.

It localises to the cytoplasm. The enzyme catalyses phosphoenolpyruvate + UDP-N-acetyl-alpha-D-glucosamine = UDP-N-acetyl-3-O-(1-carboxyvinyl)-alpha-D-glucosamine + phosphate. It participates in cell wall biogenesis; peptidoglycan biosynthesis. Cell wall formation. Adds enolpyruvyl to UDP-N-acetylglucosamine. In Helicobacter hepaticus (strain ATCC 51449 / 3B1), this protein is UDP-N-acetylglucosamine 1-carboxyvinyltransferase.